The sequence spans 562 residues: tRNA (guanine(37)-N(1))-methyltransferase (562 aa).

A mitochondrion-targeting transit peptide spans 1 to 41 (MLFRRFLNLTTKTPHLQTFRARHYFRNMSCPELIPPPTVRG). Residues H243, 281-282 (DL), and N340 contribute to the S-adenosyl-L-methionine site. Residues 523–534 (AHIVAKKPEKKP) show a composition bias toward basic and acidic residues. Residues 523-562 (AHIVAKKPEKKPLPAKPASKKNKNQANTKQVEAGLDKMQM) are disordered.

This sequence belongs to the class I-like SAM-binding methyltransferase superfamily. TRM5/TYW2 family. Monomer.

The protein localises to the mitochondrion matrix. It is found in the nucleus. The protein resides in the cytoplasm. It catalyses the reaction guanosine(37) in tRNA + S-adenosyl-L-methionine = N(1)-methylguanosine(37) in tRNA + S-adenosyl-L-homocysteine + H(+). Specifically methylates the N1 position of guanosine-37 in various cytoplasmic and mitochondrial tRNAs. Methylation is not dependent on the nature of the nucleoside 5' of the target nucleoside. This is the first step in the biosynthesis of wybutosine (yW), a modified base adjacent to the anticodon of tRNAs and required for accurate decoding. This Aedes aegypti (Yellowfever mosquito) protein is tRNA (guanine(37)-N(1))-methyltransferase.